Consider the following 667-residue polypeptide: UvrABC system protein B (667 aa).

One can recognise a Helicase ATP-binding domain in the interval 25–414; it reads TGLQRGDKHQ…GVVVEQIIRP (390 aa). An ATP-binding site is contributed by 38–45; that stretch reads GVTGSGKT. Positions 91-114 match the Beta-hairpin motif; the sequence is YYDYYQPEAYVPTTDTFIEKDSSI. A Helicase C-terminal domain is found at 430–596; that stretch reads QVDDLIHEIR…TVKKSLRSIL (167 aa). A UVR domain is found at 624-659; sequence KNEIARVKEEMLAAAANLEFEKAAELRDRMLELDKL.

The protein belongs to the UvrB family. As to quaternary structure, forms a heterotetramer with UvrA during the search for lesions. Interacts with UvrC in an incision complex.

Its subcellular location is the cytoplasm. Its function is as follows. The UvrABC repair system catalyzes the recognition and processing of DNA lesions. A damage recognition complex composed of 2 UvrA and 2 UvrB subunits scans DNA for abnormalities. Upon binding of the UvrA(2)B(2) complex to a putative damaged site, the DNA wraps around one UvrB monomer. DNA wrap is dependent on ATP binding by UvrB and probably causes local melting of the DNA helix, facilitating insertion of UvrB beta-hairpin between the DNA strands. Then UvrB probes one DNA strand for the presence of a lesion. If a lesion is found the UvrA subunits dissociate and the UvrB-DNA preincision complex is formed. This complex is subsequently bound by UvrC and the second UvrB is released. If no lesion is found, the DNA wraps around the other UvrB subunit that will check the other stand for damage. In Syntrophotalea carbinolica (strain DSM 2380 / NBRC 103641 / GraBd1) (Pelobacter carbinolicus), this protein is UvrABC system protein B.